We begin with the raw amino-acid sequence, 421 residues long: Trimethyllysine dioxygenase, mitochondrial (421 aa).

A mitochondrion-targeting transit peptide spans 1-15; it reads MWYHKLLHQQSRLRN. 2 positions are modified to N6-acetyllysine: K179 and K236. Residues H242, D244, and H389 each coordinate Fe cation.

This sequence belongs to the gamma-BBH/TMLD family. In terms of assembly, homodimer. It depends on Fe(2+) as a cofactor. L-ascorbate serves as cofactor.

Its subcellular location is the mitochondrion matrix. It catalyses the reaction N(6),N(6),N(6)-trimethyl-L-lysine + 2-oxoglutarate + O2 = (3S)-3-hydroxy-N(6),N(6),N(6)-trimethyl-L-lysine + succinate + CO2. Its pathway is amine and polyamine biosynthesis; carnitine biosynthesis. Functionally, converts trimethyllysine (TML) into hydroxytrimethyllysine (HTML). The sequence is that of Trimethyllysine dioxygenase, mitochondrial (Tmlhe) from Mus musculus (Mouse).